The sequence spans 270 residues: Probable septum site-determining protein MinC (270 aa).

The disordered stretch occupies residues D105–A129. Over residues E116–A129 the composition is skewed to low complexity.

Belongs to the MinC family. Interacts with MinD and FtsZ.

In terms of biological role, cell division inhibitor that blocks the formation of polar Z ring septums. Rapidly oscillates between the poles of the cell to destabilize FtsZ filaments that have formed before they mature into polar Z rings. Prevents FtsZ polymerization. In Burkholderia pseudomallei (strain 668), this protein is Probable septum site-determining protein MinC.